Reading from the N-terminus, the 208-residue chain is Probable Brix domain-containing ribosomal biogenesis protein (208 aa).

In terms of domain architecture, Brix spans 1 to 196; sequence MMLITTSHRP…IWIMEDGRRW (196 aa).

In terms of biological role, probably involved in the biogenesis of the ribosome. This Thermococcus kodakarensis (strain ATCC BAA-918 / JCM 12380 / KOD1) (Pyrococcus kodakaraensis (strain KOD1)) protein is Probable Brix domain-containing ribosomal biogenesis protein.